We begin with the raw amino-acid sequence, 238 residues long: 1-(5-phosphoribosyl)-5-[(5-phosphoribosylamino)methylideneamino] imidazole-4-carboxamide isomerase (238 aa).

Asp8 (proton acceptor) is an active-site residue. Catalysis depends on Asp129, which acts as the Proton donor.

This sequence belongs to the HisA/HisF family.

The protein localises to the cytoplasm. The catalysed reaction is 1-(5-phospho-beta-D-ribosyl)-5-[(5-phospho-beta-D-ribosylamino)methylideneamino]imidazole-4-carboxamide = 5-[(5-phospho-1-deoxy-D-ribulos-1-ylimino)methylamino]-1-(5-phospho-beta-D-ribosyl)imidazole-4-carboxamide. Its pathway is amino-acid biosynthesis; L-histidine biosynthesis; L-histidine from 5-phospho-alpha-D-ribose 1-diphosphate: step 4/9. In Anaeromyxobacter dehalogenans (strain 2CP-C), this protein is 1-(5-phosphoribosyl)-5-[(5-phosphoribosylamino)methylideneamino] imidazole-4-carboxamide isomerase.